A 1125-amino-acid polypeptide reads, in one-letter code: RGS domain-containing serine/threonine-protein kinase A (1125 aa).

4 disordered regions span residues 1–77, 96–191, 276–416, and 455–480; these read MKTS…GGNK, RRNS…IVDD, GISP…NNTN, and YVGG…PAPE. Low complexity-rich tracts occupy residues 7 to 30 and 37 to 66; these read SSNS…NNNN and SSKS…LSSG. Basic and acidic residues predominate over residues 121 to 136; the sequence is LDSKPPKPFDEKDDPI. 2 stretches are compositionally biased toward low complexity: residues 159–191 and 281–342; these read QPQQ…IVDD and NNNN…LNNS. Positions 343–361 are enriched in polar residues; the sequence is PRYLNSSSSPRSMQHLSSK. Residues 362 to 416 are compositionally biased toward low complexity; that stretch reads ITTTTTTTTTTTTTTSDDNNGNTNNNISNNNNIINNSNNNSNSNNNNNNNINNTN. The RGS domain maps to 487 to 603; the sequence is KFIETITDPT…ISSPFNPEWK (117 aa). Low complexity predominate over residues 617–685; that stretch reads TTTQPINNFN…NNSNGSNTSS (69 aa). 2 disordered regions span residues 617–710 and 723–762; these read TTTQ…KERS and NLSN…SNNN. Basic and acidic residues predominate over residues 690-710; it reads ERLDNIKGNRERVDSNGKERS. Residues 723–735 are compositionally biased toward low complexity; it reads NLSNHSNSSSNSN. Residues 736–748 are compositionally biased toward basic and acidic residues; sequence GKDKDKDKDKNEN. The segment covering 749–762 has biased composition (low complexity); it reads TTDNSNNNNNSNNN. In terms of domain architecture, Protein kinase spans 842-1097; it reads VSIHKWIASG…YLESIIYPSV (256 aa). Residues 848–856 and lysine 869 each bind ATP; that span reads IASGSSGRV. Aspartate 963 (proton acceptor) is an active-site residue.

Belongs to the protein kinase superfamily. TKL Ser/Thr protein kinase family. Post-translationally, autophosphorylated.

The protein resides in the cytoplasm. It localises to the cell membrane. The catalysed reaction is L-seryl-[protein] + ATP = O-phospho-L-seryl-[protein] + ADP + H(+). It catalyses the reaction L-threonyl-[protein] + ATP = O-phospho-L-threonyl-[protein] + ADP + H(+). Up-regulated by cAMP. Its function is as follows. Serine/threonine kinase involved in negative regulation of chemotaxis. This Dictyostelium discoideum (Social amoeba) protein is RGS domain-containing serine/threonine-protein kinase A (rckA).